The following is a 274-amino-acid chain: Large ribosomal subunit protein uL2 (274 aa).

Positions 195–274 (VGNSDHGLES…SKYIIERRKK (80 aa)) are disordered. Basic residues-rich tracts occupy residues 209-220 (GRSRWQGRRPRN) and 244-264 (PRSR…KKQS).

It belongs to the universal ribosomal protein uL2 family. Part of the 50S ribosomal subunit. Forms a bridge to the 30S subunit in the 70S ribosome.

Its function is as follows. One of the primary rRNA binding proteins. Required for association of the 30S and 50S subunits to form the 70S ribosome, for tRNA binding and peptide bond formation. It has been suggested to have peptidyltransferase activity; this is somewhat controversial. Makes several contacts with the 16S rRNA in the 70S ribosome. This Bacteroides fragilis (strain ATCC 25285 / DSM 2151 / CCUG 4856 / JCM 11019 / LMG 10263 / NCTC 9343 / Onslow / VPI 2553 / EN-2) protein is Large ribosomal subunit protein uL2.